Reading from the N-terminus, the 494-residue chain is Glycerol kinase (494 aa).

Thr-12 is an ADP binding site. Positions 12, 13, and 14 each coordinate ATP. Thr-12 contributes to the sn-glycerol 3-phosphate binding site. An ADP-binding site is contributed by Arg-16. The sn-glycerol 3-phosphate site is built by Arg-82, Glu-83, Tyr-134, and Asp-243. Glycerol contacts are provided by Arg-82, Glu-83, Tyr-134, Asp-243, and Gln-244. Residues Thr-265 and Gly-308 each coordinate ADP. Positions 265, 308, 312, and 408 each coordinate ATP. The ADP site is built by Gly-408 and Asn-412.

Belongs to the FGGY kinase family.

The catalysed reaction is glycerol + ATP = sn-glycerol 3-phosphate + ADP + H(+). Its pathway is polyol metabolism; glycerol degradation via glycerol kinase pathway; sn-glycerol 3-phosphate from glycerol: step 1/1. With respect to regulation, inhibited by fructose 1,6-bisphosphate (FBP). Functionally, key enzyme in the regulation of glycerol uptake and metabolism. Catalyzes the phosphorylation of glycerol to yield sn-glycerol 3-phosphate. This is Glycerol kinase from Marinomonas sp. (strain MWYL1).